The following is a 329-amino-acid chain: MKLTVLVGGVGGARFLLGAQRLLGLGQFATPDDNARHELTAVVNIGDDAWIHGLRICPDLDTCMYTLGGGVDPQRGWGHRDETWHAKEELARYGVQPDWFQLGDRDLATHLVRTQMLRAGYPLAQITTALCDRWQPGATLLPVSNDRCETHVVVTDPTDQQQRAIHFQEWWVRYRAELPTHSFVFIGTETASATTEVTAAIADADVVMLAPSNPVVSIGAILAVPGIRAALRATRAPIIGYSPIIAGKPVRGMADACLSVIGVDTTAEAVGRHYGARAATGVLDYWLVAEGDQAEIDSVTVRSIPLLMSDPEATAQMVRAGLELAGVTV.

Asp61 provides a ligand contact to 7,8-didemethyl-8-hydroxy-5-deazariboflavin.

Belongs to the CofD family. In terms of assembly, homodimer. It depends on Mg(2+) as a cofactor.

It carries out the reaction enolpyruvoyl-2-diphospho-5'-guanosine + 7,8-didemethyl-8-hydroxy-5-deazariboflavin = dehydro coenzyme F420-0 + GMP + H(+). Its pathway is cofactor biosynthesis; coenzyme F420 biosynthesis. Its function is as follows. Catalyzes the transfer of the phosphoenolpyruvate moiety from enoylpyruvoyl-2-diphospho-5'-guanosine (EPPG) to 7,8-didemethyl-8-hydroxy-5-deazariboflavin (FO) with the formation of dehydro coenzyme F420-0 and GMP. In Mycobacterium marinum (strain ATCC BAA-535 / M), this protein is Phosphoenolpyruvate transferase.